Reading from the N-terminus, the 156-residue chain is NAD(P)H-quinone oxidoreductase subunit N (156 aa).

The protein belongs to the complex I NdhN subunit family. NDH-1 can be composed of about 15 different subunits; different subcomplexes with different compositions have been identified which probably have different functions.

The protein resides in the cellular thylakoid membrane. The enzyme catalyses a plastoquinone + NADH + (n+1) H(+)(in) = a plastoquinol + NAD(+) + n H(+)(out). It carries out the reaction a plastoquinone + NADPH + (n+1) H(+)(in) = a plastoquinol + NADP(+) + n H(+)(out). In terms of biological role, NDH-1 shuttles electrons from an unknown electron donor, via FMN and iron-sulfur (Fe-S) centers, to quinones in the respiratory and/or the photosynthetic chain. The immediate electron acceptor for the enzyme in this species is believed to be plastoquinone. Couples the redox reaction to proton translocation, and thus conserves the redox energy in a proton gradient. Cyanobacterial NDH-1 also plays a role in inorganic carbon-concentration. The chain is NAD(P)H-quinone oxidoreductase subunit N from Prochlorococcus marinus subsp. pastoris (strain CCMP1986 / NIES-2087 / MED4).